The sequence spans 186 residues: Probable chorismate pyruvate-lyase (186 aa).

Substrate contacts are provided by arginine 80, leucine 118, and glutamate 170.

The protein belongs to the UbiC family.

Its subcellular location is the cytoplasm. It catalyses the reaction chorismate = 4-hydroxybenzoate + pyruvate. Its pathway is cofactor biosynthesis; ubiquinone biosynthesis. Its function is as follows. Removes the pyruvyl group from chorismate, with concomitant aromatization of the ring, to provide 4-hydroxybenzoate (4HB) for the ubiquinone pathway. This Pseudomonas savastanoi pv. phaseolicola (strain 1448A / Race 6) (Pseudomonas syringae pv. phaseolicola (strain 1448A / Race 6)) protein is Probable chorismate pyruvate-lyase.